The primary structure comprises 448 residues: SET domain-containing protein SmydA-8, isoform B (448 aa).

The 232-residue stretch at 42-273 (PSWRVADSPI…AGAEITMSYA (232 aa)) folds into the SET domain.

It belongs to the class V-like SAM-binding methyltransferase superfamily.

The chain is SET domain-containing protein SmydA-8, isoform B from Drosophila melanogaster (Fruit fly).